The sequence spans 204 residues: Signal peptidase I (204 aa).

Residues 1-10 (MNSFKNFLKE) lie on the Cytoplasmic side of the membrane. The chain crosses the membrane as a helical span at residues 11-30 (WGLFLLILSLLALSRIFFWS). The Extracellular segment spans residues 31–204 (NVRVEGHSMD…LWPITRIGTF (174 aa)). Active-site residues include S38 and K76.

It belongs to the peptidase S26 family.

It localises to the cell membrane. It carries out the reaction Cleavage of hydrophobic, N-terminal signal or leader sequences from secreted and periplasmic proteins.. This is Signal peptidase I (lepB) from Streptococcus pneumoniae serotype 4 (strain ATCC BAA-334 / TIGR4).